We begin with the raw amino-acid sequence, 237 residues long: Large ribosomal subunit protein uL1 (237 aa).

It belongs to the universal ribosomal protein uL1 family. As to quaternary structure, part of the 50S ribosomal subunit.

Its function is as follows. Binds directly to 23S rRNA. The L1 stalk is quite mobile in the ribosome, and is involved in E site tRNA release. In terms of biological role, protein L1 is also a translational repressor protein, it controls the translation of the L11 operon by binding to its mRNA. This Dehalococcoides mccartyi (strain ATCC BAA-2266 / KCTC 15142 / 195) (Dehalococcoides ethenogenes (strain 195)) protein is Large ribosomal subunit protein uL1.